Reading from the N-terminus, the 304-residue chain is Glutaminase (304 aa).

Substrate contacts are provided by serine 63, asparagine 114, glutamate 158, asparagine 165, tyrosine 189, tyrosine 240, and valine 258.

The protein belongs to the glutaminase family. As to quaternary structure, homotetramer.

The catalysed reaction is L-glutamine + H2O = L-glutamate + NH4(+). The chain is Glutaminase from Shewanella loihica (strain ATCC BAA-1088 / PV-4).